Here is a 298-residue protein sequence, read N- to C-terminus: uncharacterized protein (298 aa).

Belongs to the NAD(P)-dependent epimerase/dehydratase family.

This is an uncharacterized protein from Saccharomyces cerevisiae (strain ATCC 204508 / S288c) (Baker's yeast).